We begin with the raw amino-acid sequence, 703 residues long: WPP domain-interacting tail-anchored protein 1 (703 aa).

Residues 1–12 show a composition bias toward basic and acidic residues; it reads METETEHDRTVS. 2 disordered regions span residues 1 to 27 and 86 to 107; these read METE…SSTK and FVSK…DDDS. Residues 92–107 are compositionally biased toward acidic residues; that stretch reads EDEEEPSSNVDDDDDS. A coiled-coil region spans residues 118-183; it reads SSILNSEVKE…MEQVVEMKKQ (66 aa). The disordered stretch occupies residues 189–208; the sequence is RLSSGLDEQGSWSGGQTSVS. Residues 198 to 208 are compositionally biased toward polar residues; it reads GSWSGGQTSVS. Coiled coils occupy residues 236-265, 318-461, and 500-604; these read LEKS…MKLY, KRED…RDKG, and STVS…SREN. The chain crosses the membrane as a helical span at residues 679 to 699; the sequence is FKHILVAILVILISSIAYVIS.

Homodimer. Component of Ran complexes at least composed of WIT1 or WIT2, RANGAP1 or RANGAP2, and WIP1 or WIP2 or WIP3. Interacts with WIP2, WPP1/MAF1, WPP2/MAF2, RANGAP1 and RANGAP2. Component of a ternary complex composed of WPP1, HSP70-1 and WIT1. Interacts with KAKU1. Interacts with WIP1. Ubiquitous.

The protein resides in the nucleus envelope. Its subcellular location is the nucleus membrane. Functionally, together with WIT2, required for the nuclear envelope docking of RANGAP proteins in root tips. This is WPP domain-interacting tail-anchored protein 1 (WIT1) from Arabidopsis thaliana (Mouse-ear cress).